A 221-amino-acid polypeptide reads, in one-letter code: Small ribosomal subunit protein uS3 (221 aa).

The KH type-2 domain occupies 39-108 (IRKFVKKELF…NILINIVEVK (70 aa)).

It belongs to the universal ribosomal protein uS3 family. As to quaternary structure, part of the 30S ribosomal subunit. Forms a tight complex with proteins S10 and S14.

In terms of biological role, binds the lower part of the 30S subunit head. Binds mRNA in the 70S ribosome, positioning it for translation. This Clostridium botulinum (strain Alaska E43 / Type E3) protein is Small ribosomal subunit protein uS3.